Here is a 206-residue protein sequence, read N- to C-terminus: MAKVEVCNMSGEKVSEIDLADEIFGVEVKGSVLHEVVVMQLANRRAGTVCVKNRSDVRGSTRKLYRQKGTGRARKGDIKSPVLRGGGVVFGPHPRDYSYKVPKKVRKAALKMALSSKLADNSLKVVDNMDLPEIKTKAFAEAMAAMGVDTALIVTTGEEKNLELSARNVKGVKVMPTAGLNVYDILKYGNLILAQGAIEAIEGRLL.

This sequence belongs to the universal ribosomal protein uL4 family. In terms of assembly, part of the 50S ribosomal subunit.

Its function is as follows. One of the primary rRNA binding proteins, this protein initially binds near the 5'-end of the 23S rRNA. It is important during the early stages of 50S assembly. It makes multiple contacts with different domains of the 23S rRNA in the assembled 50S subunit and ribosome. Functionally, forms part of the polypeptide exit tunnel. The chain is Large ribosomal subunit protein uL4 from Desulfatibacillum aliphaticivorans.